The following is a 197-amino-acid chain: MYEYFEGTITVVNPAYVVIEVAGIGYRILTPTPYAYKEGDKARIYVEQVVRENGMTLYGFKSQQDKVLFNKLNEVSGIGPKSALAIMAAEDNGALASAIESGEVSYLTRFPGIGKKTASQIVLDLRGKMGNYVAENLFTEDEPVESVFPALEDALLALGALGYSQKEVDRIKPKLKKLPEMSADEYIKQGLGFLLKK.

Residues 1–61 (MYEYFEGTIT…ENGMTLYGFK (61 aa)) form a domain I region. The tract at residues 62 to 140 (SQQDKVLFNK…NYVAENLFTE (79 aa)) is domain II. A flexible linker region spans residues 141–150 (DEPVESVFPA). The interval 150–197 (ALEDALLALGALGYSQKEVDRIKPKLKKLPEMSADEYIKQGLGFLLKK) is domain III.

Belongs to the RuvA family. In terms of assembly, homotetramer. Forms an RuvA(8)-RuvB(12)-Holliday junction (HJ) complex. HJ DNA is sandwiched between 2 RuvA tetramers; dsDNA enters through RuvA and exits via RuvB. An RuvB hexamer assembles on each DNA strand where it exits the tetramer. Each RuvB hexamer is contacted by two RuvA subunits (via domain III) on 2 adjacent RuvB subunits; this complex drives branch migration. In the full resolvosome a probable DNA-RuvA(4)-RuvB(12)-RuvC(2) complex forms which resolves the HJ.

The protein resides in the cytoplasm. The RuvA-RuvB-RuvC complex processes Holliday junction (HJ) DNA during genetic recombination and DNA repair, while the RuvA-RuvB complex plays an important role in the rescue of blocked DNA replication forks via replication fork reversal (RFR). RuvA specifically binds to HJ cruciform DNA, conferring on it an open structure. The RuvB hexamer acts as an ATP-dependent pump, pulling dsDNA into and through the RuvAB complex. HJ branch migration allows RuvC to scan DNA until it finds its consensus sequence, where it cleaves and resolves the cruciform DNA. The chain is Holliday junction branch migration complex subunit RuvA from Lactobacillus delbrueckii subsp. bulgaricus (strain ATCC BAA-365 / Lb-18).